Here is a 211-residue protein sequence, read N- to C-terminus: uncharacterized protein (211 aa).

2 stretches are compositionally biased toward low complexity: residues 1-19 (MQDP…SSSD) and 61-74 (SPSV…SSNA). Disordered regions lie at residues 1 to 27 (MQDP…STGS) and 54 to 94 (ASSR…EPHR).

Interacts with RLK902. Expressed in inflorescences, stems, rosette leaves and weakly in roots.

This is an uncharacterized protein from Arabidopsis thaliana (Mouse-ear cress).